Here is a 124-residue protein sequence, read N- to C-terminus: V-type proton ATPase subunit F 1 (124 aa).

This sequence belongs to the V-ATPase F subunit family. V-ATPase is a heteromultimeric enzyme made up of two complexes: the ATP-hydrolytic V1 complex and the proton translocation V0 complex. The V1 complex consists of three catalytic AB heterodimers that form a heterohexamer, three peripheral stalks each consisting of EG heterodimers, one central rotor including subunits D and F, and the regulatory subunits C and H. The proton translocation complex V0 consists of the proton transport subunit a, a ring of proteolipid subunits c9c'', rotary subunit d, subunits e and f, and the accessory subunits VhaAC45 and ATP6AP2.

Subunit of the V1 complex of vacuolar(H+)-ATPase (V-ATPase), a multisubunit enzyme composed of a peripheral complex (V1) that hydrolyzes ATP and a membrane integral complex (V0) that translocates protons. V-ATPase is responsible for acidifying and maintaining the pH of intracellular compartments and in some cell types, is targeted to the plasma membrane, where it is responsible for acidifying the extracellular environment. This Drosophila pseudoobscura pseudoobscura (Fruit fly) protein is V-type proton ATPase subunit F 1 (Vha14).